A 503-amino-acid polypeptide reads, in one-letter code: tRNA-2-methylthio-N(6)-dimethylallyladenosine synthase (503 aa).

Residues 5-121 (RSYEIRTFGC…LPVLLERARH (117 aa)) enclose the MTTase N-terminal domain. Residues cysteine 14, cysteine 50, cysteine 84, cysteine 158, cysteine 162, and cysteine 165 each coordinate [4Fe-4S] cluster. The Radical SAM core domain occupies 144–380 (RESAYAGWVS…IALQEEISLA (237 aa)). The 71-residue stretch at 383–453 (RELIGTEVEL…PHHLIADAPV (71 aa)) folds into the TRAM domain.

The protein belongs to the methylthiotransferase family. MiaB subfamily. Monomer. [4Fe-4S] cluster is required as a cofactor.

Its subcellular location is the cytoplasm. It catalyses the reaction N(6)-dimethylallyladenosine(37) in tRNA + (sulfur carrier)-SH + AH2 + 2 S-adenosyl-L-methionine = 2-methylsulfanyl-N(6)-dimethylallyladenosine(37) in tRNA + (sulfur carrier)-H + 5'-deoxyadenosine + L-methionine + A + S-adenosyl-L-homocysteine + 2 H(+). Functionally, catalyzes the methylthiolation of N6-(dimethylallyl)adenosine (i(6)A), leading to the formation of 2-methylthio-N6-(dimethylallyl)adenosine (ms(2)i(6)A) at position 37 in tRNAs that read codons beginning with uridine. The chain is tRNA-2-methylthio-N(6)-dimethylallyladenosine synthase from Nocardia farcinica (strain IFM 10152).